We begin with the raw amino-acid sequence, 216 residues long: Fibroblast growth factor 19 (216 aa).

The N-terminal stretch at methionine 1 to proline 24 is a signal peptide. 2 disulfides stabilise this stretch: cysteine 58–cysteine 70 and cysteine 102–cysteine 120.

It belongs to the heparin-binding growth factors family. Interacts with FGFR1, FGFR2, FGFR3 and FGFR4. Affinity between fibroblast growth factors (FGFs) and their receptors is increased by KL, KLB and heparan sulfate glycosaminoglycans that function as coreceptors. Interacts with KL; this interaction is direct. Interacts with KLB; this interaction is direct. Interacts with FGFR4 in the presence of heparin, KL or KLB. Interacts with MALRD1. Expressed in fetal brain, cartilage, retina, and adult gall bladder.

It is found in the secreted. Its function is as follows. Involved in the suppression of bile acid biosynthesis through down-regulation of CYP7A1 expression, following positive regulation of the JNK and ERK1/2 cascades. Stimulates glucose uptake in adipocytes. Activity requires the presence of KLB and FGFR4. This is Fibroblast growth factor 19 (FGF19) from Homo sapiens (Human).